The primary structure comprises 228 residues: UPF0758 protein CLD_1541 (228 aa).

In terms of domain architecture, MPN spans 106-228 (KINTPLDVSN…YVSMKEKGTI (123 aa)). Positions 177, 179, and 190 each coordinate Zn(2+). The short motif at 177 to 190 (HNHPSGDPTPSKED) is the JAMM motif element.

This sequence belongs to the UPF0758 family.

This is UPF0758 protein CLD_1541 from Clostridium botulinum (strain Okra / Type B1).